Here is a 77-residue protein sequence, read N- to C-terminus: Small ribosomal subunit protein bS20 (77 aa).

It belongs to the bacterial ribosomal protein bS20 family.

Its function is as follows. Binds directly to 16S ribosomal RNA. This Streptococcus agalactiae serotype Ia (strain ATCC 27591 / A909 / CDC SS700) protein is Small ribosomal subunit protein bS20.